The following is a 281-amino-acid chain: 2-dehydro-3-deoxyphosphooctonate aldolase (281 aa).

It belongs to the KdsA family.

The protein localises to the cytoplasm. The catalysed reaction is D-arabinose 5-phosphate + phosphoenolpyruvate + H2O = 3-deoxy-alpha-D-manno-2-octulosonate-8-phosphate + phosphate. The protein operates within carbohydrate biosynthesis; 3-deoxy-D-manno-octulosonate biosynthesis; 3-deoxy-D-manno-octulosonate from D-ribulose 5-phosphate: step 2/3. It participates in bacterial outer membrane biogenesis; lipopolysaccharide biosynthesis. The protein is 2-dehydro-3-deoxyphosphooctonate aldolase of Acidithiobacillus ferrooxidans (strain ATCC 23270 / DSM 14882 / CIP 104768 / NCIMB 8455) (Ferrobacillus ferrooxidans (strain ATCC 23270)).